We begin with the raw amino-acid sequence, 278 residues long: Polyamine aminopropyltransferase (278 aa).

One can recognise a PABS domain in the interval 5 to 238; it reads ELWFTEQQTP…GLWSFTLGSK (234 aa). Glutamine 34 contributes to the S-methyl-5'-thioadenosine binding site. The spermidine site is built by histidine 65 and aspartate 89. S-methyl-5'-thioadenosine contacts are provided by residues glutamate 109 and 140-141; that span reads DG. The Proton acceptor role is filled by aspartate 158. 158–161 is a binding site for spermidine; the sequence is DSTD. Proline 165 contacts S-methyl-5'-thioadenosine.

This sequence belongs to the spermidine/spermine synthase family. As to quaternary structure, homodimer or homotetramer.

It is found in the cytoplasm. It carries out the reaction S-adenosyl 3-(methylsulfanyl)propylamine + putrescine = S-methyl-5'-thioadenosine + spermidine + H(+). It participates in amine and polyamine biosynthesis; spermidine biosynthesis; spermidine from putrescine: step 1/1. In terms of biological role, catalyzes the irreversible transfer of a propylamine group from the amino donor S-adenosylmethioninamine (decarboxy-AdoMet) to putrescine (1,4-diaminobutane) to yield spermidine. The sequence is that of Polyamine aminopropyltransferase from Caldicellulosiruptor bescii (strain ATCC BAA-1888 / DSM 6725 / KCTC 15123 / Z-1320) (Anaerocellum thermophilum).